A 277-amino-acid polypeptide reads, in one-letter code: Uridine-cytidine kinase 1 (277 aa).

ATP is bound at residue glycine 24–threonine 32. Substrate contacts are provided by aspartate 81, tyrosine 109, histidine 114, arginine 163, arginine 172, and glutamine 180. Aspartate 209 is an ATP binding site. The disordered stretch occupies residues asparagine 241–histidine 277.

This sequence belongs to the uridine kinase family.

The catalysed reaction is uridine + ATP = UMP + ADP + H(+). It catalyses the reaction cytidine + ATP = CMP + ADP + H(+). The protein operates within pyrimidine metabolism; CTP biosynthesis via salvage pathway; CTP from cytidine: step 1/3. It functions in the pathway pyrimidine metabolism; UMP biosynthesis via salvage pathway; UMP from uridine: step 1/1. In terms of biological role, phosphorylates uridine and cytidine to uridine monophosphate and cytidine monophosphate. Does not phosphorylate deoxyribonucleosides or purine ribonucleosides. Can use ATP or GTP as a phosphate donor. The polypeptide is Uridine-cytidine kinase 1 (uck1) (Danio rerio (Zebrafish)).